The chain runs to 637 residues: Glutathione hydrolase 3 (637 aa).

A helical membrane pass occupies residues 28–48; the sequence is LKISLLLLLILLATSGYYSFS. Asn50 carries an N-linked (GlcNAc...) asparagine glycan. Residue Arg147 participates in L-glutamate binding. Asn271, Asn374, and Asn398 each carry an N-linked (GlcNAc...) asparagine glycan. Thr418 functions as the Nucleophile in the catalytic mechanism. L-glutamate-binding positions include Thr436, Asn438, Glu457, Asp460, 488-489, and 509-510; these read SS and GG. N-linked (GlcNAc...) asparagine glycosylation occurs at Asn553.

The protein belongs to the gamma-glutamyltransferase family. In terms of tissue distribution, expressed in roots, cotyledons, leaves, flowers and siliques.

It localises to the vacuole membrane. The enzyme catalyses an N-terminal (5-L-glutamyl)-[peptide] + an alpha-amino acid = 5-L-glutamyl amino acid + an N-terminal L-alpha-aminoacyl-[peptide]. It carries out the reaction glutathione + H2O = L-cysteinylglycine + L-glutamate. It catalyses the reaction an S-substituted glutathione + H2O = an S-substituted L-cysteinylglycine + L-glutamate. Its pathway is sulfur metabolism; glutathione metabolism. In terms of biological role, may play a role in protecting plants from some xenobiotic chemicals by degrading vacuolar glutathione conjugates into cysteine conjugates. The chain is Glutathione hydrolase 3 (GGT3) from Arabidopsis thaliana (Mouse-ear cress).